Reading from the N-terminus, the 45-residue chain is Parabutoporin (45 aa).

In terms of assembly, monomer and homodimer. In terms of tissue distribution, expressed by the venom gland.

Its subcellular location is the secreted. The protein localises to the target cell membrane. In terms of biological role, at high concentrations, acts as a pore former in cellular membranes and causes the leakage of the cells. At submicromolar concentrations, degranulates granulocytes and has a weak hemolytic activity against human red blood cells. Also strongly inhibits the production of superoxide anions. Has a strong antibacterial activity against Gram-negative bacteria but is less active against Gram-positive bacteria. Also has antifungal activity. Induces reversible G-protein dependent Ca(2+) release from intracellular stores and increase Ca(2+) influx in HL-60 cells. Induces the activation of the Rac pathway in granulocytes. Synergistically enhances the excitatory effects of short and long chain ion-channel-specific neurotoxins by interaction with the neuronal membranes. The chain is Parabutoporin from Parabuthus schlechteri (Scorpion).